The following is a 75-amino-acid chain: Small ribosomal subunit protein eS31 (75 aa).

Zn(2+)-binding residues include Cys41, Cys44, Cys60, and Cys63. The segment at 41-63 adopts a C4-type zinc-finger fold; sequence CPRCGSIMAHHLKPNERWSCGKC.

The protein belongs to the eukaryotic ribosomal protein eS31 family. As to quaternary structure, part of the 30S ribosomal subunit. It depends on Zn(2+) as a cofactor.

This is Small ribosomal subunit protein eS31 from Saccharolobus solfataricus (strain ATCC 35092 / DSM 1617 / JCM 11322 / P2) (Sulfolobus solfataricus).